The chain runs to 61 residues: Large ribosomal subunit protein bL28 (61 aa).

This sequence belongs to the bacterial ribosomal protein bL28 family.

This chain is Large ribosomal subunit protein bL28, found in Geobacillus sp. (strain WCH70).